Reading from the N-terminus, the 148-residue chain is Large ribosomal subunit protein bL9 (148 aa).

This sequence belongs to the bacterial ribosomal protein bL9 family.

Its function is as follows. Binds to the 23S rRNA. The polypeptide is Large ribosomal subunit protein bL9 (Parabacteroides distasonis (strain ATCC 8503 / DSM 20701 / CIP 104284 / JCM 5825 / NCTC 11152)).